The following is a 370-amino-acid chain: Ubiquitin carboxyl-terminal hydrolase 12 (370 aa).

The short motif at 1–4 (MEIL) is the Required for plasma membrane localization of USP12/WDR20 element. The region spanning 39 to 369 (FGLVNFGNTC…SGYILFYQSR (331 aa)) is the USP domain. Catalysis depends on cysteine 48, which acts as the Nucleophile. The span at 146-157 (QEKQNGRLRNGD) shows a compositional bias: basic and acidic residues. A disordered region spans residues 146-168 (QEKQNGRLRNGDVDSEDNNSTPD). Cysteine 186, cysteine 189, cysteine 233, and cysteine 236 together coordinate Zn(2+). Residue histidine 317 is the Proton acceptor of the active site.

Belongs to the peptidase C19 family. USP12/USP46 subfamily. Interacts with WDR48. Interacts with WDR20; this interaction promotes translocation of the USP12 complex to the plasma membrane. Component of the USP12-WDR20-WDR48 deubiquitinating complex. Component of the USP12-DMWD-WDR48 deubiquitinating complex. Interacts with PHLPP1. Interacts with RBPJ. Interacts with CBP; this interaction blocks the acetyltransferase activity of CREBBP. Interacts with ITCH; the interaction is more efficient when both USP12 and WDR48/UAF1 are involved and may mediate recruitment of the USP12 deubiquitinating complex to Notch.

Its subcellular location is the nucleus. It is found in the cytoplasm. It localises to the cell membrane. The enzyme catalyses Thiol-dependent hydrolysis of ester, thioester, amide, peptide and isopeptide bonds formed by the C-terminal Gly of ubiquitin (a 76-residue protein attached to proteins as an intracellular targeting signal).. With respect to regulation, activated by interaction with WDR20, WDR48 and DMWD through different allosteric mechanisms. In terms of biological role, deubiquitinating enzyme that plays various roles in the regulation of the immune response and inflammation. During TCR engagement and activation, translocates into the cytoplasm and deubiquitinates its substrates LAT and TRAT1 and prevents their lysosome-dependent degradation to stabilize the TCR signaling complex at the plasma membrane. Plays an essential role in the selective LPS-induced macrophage response through the activation of NF-kappa-B pathway. In addition, promotes that antiviral immune response through targeting DNA sensor IFI16 to inhibit its proteasome-dependent degradation. Participates in the interferon signaling pathway and antiviral response independently of its deubiquitinase activity by maintaining nuclear phosphorylated STAT1 levels via inhibition of its CREBBP-mediated acetylation and subsequent dephosphorylation. Plays an intrinsic role in promoting the differentiation, activation and proliferation of CD4(+) T-cell by activating the NF-kappa-B signaling pathway through deubiquitinating and stabilizing B-cell lymphoma/leukemia 10/BCL10. In myeloid-derived suppressor cells promotes the activation of the NF-kappa-B via deubiquitination and stabilization of RELA. Regulates the 'Lys-63'-linked polyubiquitin chains of BAX and thereby modulates the mitochondrial apoptotic process. Negative regulator of NOTCH signaling that specifically deubiquitinates non-activated NOTCH receptors to target them for lysosomal degradation; deubiquitination of NOTCH stimulates its transport form late endosomes to lysosomes. Protects neurons against HTT/huntingtin-induced polyglutamine expansion-dependent neurodegeneration through regulation of autophagic flux. This function is independent of deubiquitinase activity or of other components of the USP12-WDR20-WDR48 deubiquitinating complex. In complex with WDR48, acts as a potential tumor suppressor by positively regulating PHLPP1 stability. In Rattus norvegicus (Rat), this protein is Ubiquitin carboxyl-terminal hydrolase 12.